Consider the following 82-residue polypeptide: Small ribosomal subunit protein eS27B (82 aa).

The segment at 37-59 (CPGCLNITTVFSHAQTAVTCESC) adopts a C4-type zinc-finger fold.

Belongs to the eukaryotic ribosomal protein eS27 family. In terms of assembly, component of the small ribosomal subunit (SSU). Mature yeast ribosomes consist of a small (40S) and a large (60S) subunit. The 40S small subunit contains 1 molecule of ribosomal RNA (18S rRNA) and 33 different proteins (encoded by 57 genes). The large 60S subunit contains 3 rRNA molecules (25S, 5.8S and 5S rRNA) and 46 different proteins (encoded by 81 genes). It depends on Zn(2+) as a cofactor. The N-terminus is not modified.

The protein resides in the cytoplasm. Its function is as follows. Component of the ribosome, a large ribonucleoprotein complex responsible for the synthesis of proteins in the cell. The small ribosomal subunit (SSU) binds messenger RNAs (mRNAs) and translates the encoded message by selecting cognate aminoacyl-transfer RNA (tRNA) molecules. The large subunit (LSU) contains the ribosomal catalytic site termed the peptidyl transferase center (PTC), which catalyzes the formation of peptide bonds, thereby polymerizing the amino acids delivered by tRNAs into a polypeptide chain. The nascent polypeptides leave the ribosome through a tunnel in the LSU and interact with protein factors that function in enzymatic processing, targeting, and the membrane insertion of nascent chains at the exit of the ribosomal tunnel. This Saccharomyces cerevisiae (strain ATCC 204508 / S288c) (Baker's yeast) protein is Small ribosomal subunit protein eS27B.